The following is a 555-amino-acid chain: Formate--tetrahydrofolate ligase (555 aa).

An ATP-binding site is contributed by 65–72 (TPAGEGKS).

This sequence belongs to the formate--tetrahydrofolate ligase family.

It carries out the reaction (6S)-5,6,7,8-tetrahydrofolate + formate + ATP = (6R)-10-formyltetrahydrofolate + ADP + phosphate. Its pathway is one-carbon metabolism; tetrahydrofolate interconversion. The protein is Formate--tetrahydrofolate ligase of Staphylococcus carnosus (strain TM300).